The primary structure comprises 571 residues: Phosphoenolpyruvate-protein phosphotransferase (571 aa).

Histidine 207 (tele-phosphohistidine intermediate) is an active-site residue. 2 residues coordinate phosphoenolpyruvate: arginine 312 and arginine 348. Mg(2+)-binding residues include glutamate 435 and aspartate 459. Phosphoenolpyruvate is bound by residues 458–459 and arginine 469; that span reads ND. The active-site Proton donor is cysteine 506.

Belongs to the PEP-utilizing enzyme family. Homodimer. The cofactor is Mg(2+).

The protein localises to the cytoplasm. The catalysed reaction is L-histidyl-[protein] + phosphoenolpyruvate = N(pros)-phospho-L-histidyl-[protein] + pyruvate. In terms of biological role, general (non sugar-specific) component of the phosphoenolpyruvate-dependent sugar phosphotransferase system (sugar PTS). This major carbohydrate active-transport system catalyzes the phosphorylation of incoming sugar substrates concomitantly with their translocation across the cell membrane. Enzyme I transfers the phosphoryl group from phosphoenolpyruvate (PEP) to the phosphoryl carrier protein (HPr). The polypeptide is Phosphoenolpyruvate-protein phosphotransferase (ptsI) (Chlamydia trachomatis serovar D (strain ATCC VR-885 / DSM 19411 / UW-3/Cx)).